The chain runs to 183 residues: 2-epi-5-epi-valiolone epimerase (183 aa).

The VOC domain maps to 11 to 155 (AVHHVAYTVP…WGMQLELINL (145 aa)). A divalent metal cation-binding residues include H14, E76, H99, and E151.

As to quaternary structure, homodimer. Requires a divalent metal cation as cofactor.

It carries out the reaction 2-epi-5-epi-valiolone = 5-epi-valiolone. The protein operates within antibiotic biosynthesis. Its function is as follows. Catalyzes the epimerization of 2-epi-5-epi-valiolone to 5-epi-valiolone. Involved in cetoniacytone A biosynthesis. This Actinomyces sp protein is 2-epi-5-epi-valiolone epimerase.